A 324-amino-acid chain; its full sequence is NADH-ubiquinone oxidoreductase chain 1 (324 aa).

Transmembrane regions (helical) follow at residues 3 to 23, 73 to 93, 106 to 126, 151 to 171, 175 to 195, 226 to 246, 255 to 275, and 295 to 315; these read LLFM…AVAF, LLFI…WTPF, ILFI…SGWA, ALII…AFAI, FTWF…STLA, LFFL…TIIF, TLTT…FLWV, and FLPL…SLLF.

This sequence belongs to the complex I subunit 1 family.

The protein resides in the mitochondrion inner membrane. The catalysed reaction is a ubiquinone + NADH + 5 H(+)(in) = a ubiquinol + NAD(+) + 4 H(+)(out). Functionally, core subunit of the mitochondrial membrane respiratory chain NADH dehydrogenase (Complex I) that is believed to belong to the minimal assembly required for catalysis. Complex I functions in the transfer of electrons from NADH to the respiratory chain. The immediate electron acceptor for the enzyme is believed to be ubiquinone. This chain is NADH-ubiquinone oxidoreductase chain 1 (MT-ND1), found in Aquarana catesbeiana (American bullfrog).